The primary structure comprises 457 residues: Bifunctional protein GlmU (457 aa).

Residues 1 to 230 (MSKRYAVVLA…FEESLGVNDR (230 aa)) form a pyrophosphorylase region. UDP-N-acetyl-alpha-D-glucosamine-binding positions include 9–12 (LAAG), Lys23, Gln73, and 78–79 (GT). Asp103 contributes to the Mg(2+) binding site. UDP-N-acetyl-alpha-D-glucosamine contacts are provided by Gly140, Glu155, Asn170, and Asn228. Asn228 is a Mg(2+) binding site. The interval 231-251 (IALAEASRLMQRRINENHMRN) is linker. Residues 252–457 (GVTLVNPENT…GYAKHLNHGK (206 aa)) are N-acetyltransferase. The UDP-N-acetyl-alpha-D-glucosamine site is built by Arg333 and Lys351. His363 acts as the Proton acceptor in catalysis. Tyr366 and Asn377 together coordinate UDP-N-acetyl-alpha-D-glucosamine. Acetyl-CoA contacts are provided by residues 386–387 (NY), Ala423, and Arg440.

This sequence in the N-terminal section; belongs to the N-acetylglucosamine-1-phosphate uridyltransferase family. It in the C-terminal section; belongs to the transferase hexapeptide repeat family. As to quaternary structure, homotrimer. Mg(2+) serves as cofactor.

Its subcellular location is the cytoplasm. It carries out the reaction alpha-D-glucosamine 1-phosphate + acetyl-CoA = N-acetyl-alpha-D-glucosamine 1-phosphate + CoA + H(+). The catalysed reaction is N-acetyl-alpha-D-glucosamine 1-phosphate + UTP + H(+) = UDP-N-acetyl-alpha-D-glucosamine + diphosphate. Its pathway is nucleotide-sugar biosynthesis; UDP-N-acetyl-alpha-D-glucosamine biosynthesis; N-acetyl-alpha-D-glucosamine 1-phosphate from alpha-D-glucosamine 6-phosphate (route II): step 2/2. It functions in the pathway nucleotide-sugar biosynthesis; UDP-N-acetyl-alpha-D-glucosamine biosynthesis; UDP-N-acetyl-alpha-D-glucosamine from N-acetyl-alpha-D-glucosamine 1-phosphate: step 1/1. It participates in bacterial outer membrane biogenesis; LPS lipid A biosynthesis. In terms of biological role, catalyzes the last two sequential reactions in the de novo biosynthetic pathway for UDP-N-acetylglucosamine (UDP-GlcNAc). The C-terminal domain catalyzes the transfer of acetyl group from acetyl coenzyme A to glucosamine-1-phosphate (GlcN-1-P) to produce N-acetylglucosamine-1-phosphate (GlcNAc-1-P), which is converted into UDP-GlcNAc by the transfer of uridine 5-monophosphate (from uridine 5-triphosphate), a reaction catalyzed by the N-terminal domain. The protein is Bifunctional protein GlmU of Listeria monocytogenes serotype 4b (strain CLIP80459).